The sequence spans 180 residues: Bifunctional protein PyrR (180 aa).

The PRPP-binding signature appears at 101–113; that stretch reads VILVDDVLYTGRT.

It belongs to the purine/pyrimidine phosphoribosyltransferase family. PyrR subfamily. Homodimer and homohexamer; in equilibrium.

It carries out the reaction UMP + diphosphate = 5-phospho-alpha-D-ribose 1-diphosphate + uracil. Regulates transcriptional attenuation of the pyrimidine nucleotide (pyr) operon by binding in a uridine-dependent manner to specific sites on pyr mRNA. This disrupts an antiterminator hairpin in the RNA and favors formation of a downstream transcription terminator, leading to a reduced expression of downstream genes. Functionally, also displays a weak uracil phosphoribosyltransferase activity which is not physiologically significant. This chain is Bifunctional protein PyrR, found in Bacillus mycoides (strain KBAB4) (Bacillus weihenstephanensis).